We begin with the raw amino-acid sequence, 666 residues long: Zinc finger MYM-type protein 5 (666 aa).

Glycyl lysine isopeptide (Lys-Gly) (interchain with G-Cter in SUMO2) cross-links involve residues Lys85, Lys88, Lys146, and Lys163. The segment at 87–106 (EKPQGNYSVIPPPSRDLASQ) is disordered. Positions 191-212 (SPDSWISQSASFPRNQKQPGVD) are disordered. A compositionally biased stretch (polar residues) spans 194–208 (SWISQSASFPRNQKQ). Lys222 is covalently cross-linked (Glycyl lysine isopeptide (Lys-Gly) (interchain with G-Cter in SUMO2)). MYM-type zinc fingers lie at residues 262 to 296 (HLFC…KKAD), 308 to 348 (QEFC…RHEV), 355 to 390 (HKLC…KSTG), and 401 to 428 (KRFC…ASEN). Residues Lys440, Lys452, Lys459, and Lys549 each participate in a glycyl lysine isopeptide (Lys-Gly) (interchain with G-Cter in SUMO2) cross-link.

Interacts (via N-terminal 120 amino acid region) with ETV5 (via C-terminal).

It localises to the nucleus. Functions as a transcriptional regulator. The sequence is that of Zinc finger MYM-type protein 5 (ZMYM5) from Macaca fascicularis (Crab-eating macaque).